The following is a 280-amino-acid chain: Keratin, type I cytoskeletal 47 kDa (280 aa).

The interval 1–81 (MSFRSSSSYS…SSSFSSFGGN (81 aa)) is head. Residues 82–117 (DKQTMQNLNDRLASYLEKVRALEAANADLELKIREW) are coil 1A. The IF rod domain occupies 82–280 (DKQTMQNLND…RDAELWFNQK (199 aa)). Positions 118-139 (YEKQKGSGIGAASKDFSKYFEI) are linker 1. The segment at 140–231 (ISDLRNKILF…KNHEEEMSIA (92 aa)) is coil 1B. Positions 232 to 254 (KGSAAGQVTVEMDAAPGVDLNKI) are linker 12. The coil 2 stretch occupies residues 255 to 280 (LSDMRADYETLAEKNRRDAELWFNQK).

Belongs to the intermediate filament family. As to quaternary structure, heterotetramer of two type I and two type II keratins.

The polypeptide is Keratin, type I cytoskeletal 47 kDa (xk81b1) (Xenopus laevis (African clawed frog)).